Reading from the N-terminus, the 300-residue chain is Acetylglutamate kinase (300 aa).

Substrate is bound by residues 72 to 73, Arg-94, and Asn-197; that span reads GG.

Belongs to the acetylglutamate kinase family. ArgB subfamily.

The protein resides in the cytoplasm. It catalyses the reaction N-acetyl-L-glutamate + ATP = N-acetyl-L-glutamyl 5-phosphate + ADP. Its pathway is amino-acid biosynthesis; L-arginine biosynthesis; N(2)-acetyl-L-ornithine from L-glutamate: step 2/4. In terms of biological role, catalyzes the ATP-dependent phosphorylation of N-acetyl-L-glutamate. This chain is Acetylglutamate kinase, found in Aromatoleum aromaticum (strain DSM 19018 / LMG 30748 / EbN1) (Azoarcus sp. (strain EbN1)).